Reading from the N-terminus, the 108-residue chain is MEKEIIITTTETVPQREVAEILGVVFGNTVRAKHVGKDILAGLKNIVGGEIEEYTEMLRDARMEALNRMIKEAKKLGADAVVNVRFTTSQTMAGAAELLAYGTAVRLR.

The protein belongs to the UPF0145 family.

This chain is UPF0145 protein AF_0869, found in Archaeoglobus fulgidus (strain ATCC 49558 / DSM 4304 / JCM 9628 / NBRC 100126 / VC-16).